A 93-amino-acid polypeptide reads, in one-letter code: Large ribosomal subunit protein bL27 (93 aa).

The propeptide occupies 1 to 9; it reads MLRLDLQFF.

Belongs to the bacterial ribosomal protein bL27 family. Post-translationally, the N-terminus is cleaved by ribosomal processing cysteine protease Prp.

The protein is Large ribosomal subunit protein bL27 of Bacillus licheniformis (strain ATCC 14580 / DSM 13 / JCM 2505 / CCUG 7422 / NBRC 12200 / NCIMB 9375 / NCTC 10341 / NRRL NRS-1264 / Gibson 46).